The chain runs to 697 residues: MDQTLSKEERNELMDLLQITRAAWGNLSMMKKAYKNVSKLYHPDKGGDSAKMQRLNELFQRVQVTLMEIRSQCGSSSSQGYFSEDFYFGPTTFQYSPMDRDAVREDLPNPGEGSWGKWWREFVNRQCCDDLFCSETMSSSSDEDTPPAAQPPPPPAPSPEEEDEIEFVEETPSSCDGSSSQSSYTCTPPKRKKTEEKKPDDFPVCLYSFLSHAIYSNKTMNSFLIYTTLEKARQLYKTVEKSKIVVDFKASFSYQDEEGEGCLLFLITLGKHRVSAVKHFCVSQCTFSFIHCKAVVKPLELYKTLSKPPFKLLEENKPGVSMFEFQEEKEQSVNWQEICNFANEANISDVLLLLGIYIDFAVEPGKCGKCEKKQHKFHYNYHKAHHANACLFLESRAQKNICQQAVDQVLAAKRLKLVECSRIELLEERFLQLFDEMDDFLHGEIEILRWMAGVAWYTILLDNSWDVFQNILQLITTSQPKKRNVLIKGPINSGKTTLASAFMHFFDGKALNINCPADKLSFELGCAIDQFCVLLDDVKGQITLNKHLQPGQGVNNLDNLRDHLDGTIKVNLEKKHVNKRSQIFPPVIMTMNEYLLPPTIGVRFALHLHLKPKAYLKQSLEKSDLVAKRILNSGYTILLLLLWYNPVDSFTPKVQEKVVQWKETLEKYVSITQFGNIQQNIIDGKDPLHGIVIEEQM.

N-acetylmethionine; by host is present on Met1. One can recognise a J domain in the interval 12 to 75 (ELMDLLQITR…LMEIRSQCGS (64 aa)). The segment at 131–135 (LFCSE) is binding to host RB1 protein and transforming activity. A phosphoserine; by host mark is found at Ser134 and Ser140. Residues 136-198 (TMSSSSDEDT…PKRKKTEEKK (63 aa)) are disordered. Residues 148–158 (AAQPPPPPAPS) show a composition bias toward pro residues. Acidic residues predominate over residues 159–169 (PEEEDEIEFVE). The span at 170–183 (ETPSSCDGSSSQSS) shows a compositional bias: low complexity. Thr187 is subject to Phosphothreonine; by host. Positions 188–196 (PPKRKKTEE) match the Nuclear localization signal motif. The segment at residues 203 to 323 (PVCLYSFLSH…EENKPGVSMF (121 aa)) is a DNA-binding region (T-ag OBD). The T-ag D1-type zinc finger occupies 330-422 (EQSVNWQEIC…KRLKLVECSR (93 aa)). Residues Cys367, Cys370, His378, and His382 each contribute to the Zn(2+) site. In terms of domain architecture, SF3 helicase spans 463 to 623 (NSWDVFQNIL…AYLKQSLEKS (161 aa)). 489–496 (GPINSGKT) is a binding site for ATP.

Forms homohexamers in the presence of ATP. Interacts with host HDAC1. Interacts (via LXCXE domain) with host RB1; the interaction induces the aberrant dissociation of RB1-E2F1 complex thereby disrupting RB1's activity. Interacts (via LXCXE domain) with host pRB-related proteins RBL1 and RBL2. Interacts (via C-terminus) with host TOP1 and POLA1 allowing DNA replication. Interacts with host TP53, inhibiting TP53 binding to DNA. Interacts with host preinitiation complex components TBP, TFIIA and TFIID to regulate transcription initiation. Mg(2+) is required as a cofactor. In terms of processing, phosphorylated on both serine and threonine residues. Small t antigen inhibits the dephosphorylation by the AC form of PP2A. O-Glycosylated near the C-terminal region. Post-translationally, acetylated by CBP in a TP53-dependent manner.

Its subcellular location is the host nucleus. The enzyme catalyses Couples ATP hydrolysis with the unwinding of duplex DNA by translocating in the 3'-5' direction.. The catalysed reaction is ATP + H2O = ADP + phosphate + H(+). Functionally, isoform large T antigen is a key early protein essential for both driving viral replication and inducing cellular transformation. Plays a role in viral genome replication by driving entry of quiescent cells into the cell cycle and by autoregulating the synthesis of viral early mRNA. Displays highly oncogenic activities by corrupting the host cellular checkpoint mechanisms that guard cell division and the transcription, replication, and repair of DNA. Participates in the modulation of cellular gene expression preceeding viral DNA replication. This step involves binding to host key cell cycle regulators retinoblastoma protein RB1/pRb and TP53. Induces the disassembly of host E2F1 transcription factors from RB1, thus promoting transcriptional activation of E2F1-regulated S-phase genes. Inhibits host TP53 binding to DNA, abrogating the ability of TP53 to stimulate gene expression. Plays the role of a TFIID-associated factor (TAF) in transcription initiation for all three RNA polymerases, by stabilizing the TBP-TFIIA complex on promoters. Initiates viral DNA replication and unwinding via interactions with the viral origin of replication. Binds two adjacent sites in the SV40 origin. The replication fork movement is facilitated by Large T antigen helicase activity. Has processive 3'-5' DNA helicase activity which requires a short 3' single-stranded region and ATP. Activates the transcription of viral late mRNA, through host TBP and TFIIA stabilization. Interferes with histone deacetylation mediated by HDAC1, leading to activation of transcription. In Chlorocebus aethiops (Green monkey), this protein is Large T antigen.